The chain runs to 344 residues: UDP-N-acetylenolpyruvoylglucosamine reductase (344 aa).

Residues 15–185 (LPACANQIIE…ISVGLKLAKA (171 aa)) enclose the FAD-binding PCMH-type domain. Arginine 161 is an active-site residue. Serine 231 (proton donor) is an active-site residue. Glutamate 327 is a catalytic residue.

This sequence belongs to the MurB family. Requires FAD as cofactor.

The protein resides in the cytoplasm. The catalysed reaction is UDP-N-acetyl-alpha-D-muramate + NADP(+) = UDP-N-acetyl-3-O-(1-carboxyvinyl)-alpha-D-glucosamine + NADPH + H(+). The protein operates within cell wall biogenesis; peptidoglycan biosynthesis. In terms of biological role, cell wall formation. The polypeptide is UDP-N-acetylenolpyruvoylglucosamine reductase (Haemophilus ducreyi (strain 35000HP / ATCC 700724)).